Reading from the N-terminus, the 110-residue chain is Iron-sulfur cluster assembly protein CyaY (110 aa).

It belongs to the frataxin family.

Its function is as follows. Involved in iron-sulfur (Fe-S) cluster assembly. May act as a regulator of Fe-S biogenesis. The chain is Iron-sulfur cluster assembly protein CyaY from Pseudomonas putida (strain ATCC 700007 / DSM 6899 / JCM 31910 / BCRC 17059 / LMG 24140 / F1).